A 43-amino-acid polypeptide reads, in one-letter code: Iota-conotoxin-like Fi11.6 (43 aa).

4 disulfide bridges follow: C2–C16, C9–C19, C15–C24, and C18–C35. The residue at position 8 (P8) is a 4-hydroxyproline. Position 26 is a 4-hydroxyproline (P26). Position 30 is a 6'-bromotryptophan (W30). F41 carries the D-phenylalanine modification.

This sequence belongs to the conotoxin I1 superfamily. In terms of tissue distribution, expressed by the venom duct.

The protein resides in the secreted. Its function is as follows. Iota-conotoxins bind to voltage-gated sodium channels (Nav) and act as agonists by shifting the voltage-dependence of activation to more hyperpolarized levels. Produces general excitatory symptoms. In Conus figulinus (Fig cone), this protein is Iota-conotoxin-like Fi11.6.